The sequence spans 369 residues: MSSVTLHNVSKAYGETIISKNINLEIQEGEFIVFVGPSGCGKSTILRMIAGLEDVTSGDLLINNIRMNDVPPAKRGVGMVFQSYALYPHLSVADNMSFGMKLAGAKKSDIQQRVKQIAEMLQLAHLLDRRPKALSGGQRQRVAIGRTLVAEPSVFLLDEPLSNLDAALRVQMRIEISRLHKRLQRTMIYVTHDQVEAMTLADRIVVLDGGDVAQIGKPLELYHYPVNRFVASFIGSPKMNFLPVKVTATAIDQVQITLPNRQQIWLPVESKGVKVGSNVSLGIRPEHLLPSDIADVTLEGIVQVVEQLGNETQVHIEIPAIHQNLVYRQPDVVLVEEGSTFTIGLPPHRCHLFREDGTACQRLHEEPGV.

The ABC transporter domain occupies 4-234 (VTLHNVSKAY…PVNRFVASFI (231 aa)). Position 36–43 (36–43 (GPSGCGKS)) interacts with ATP.

The protein belongs to the ABC transporter superfamily. Maltooligosaccharide importer (TC 3.A.1.1.1) family. In terms of assembly, the complex is composed of two ATP-binding proteins (MalK), two transmembrane proteins (MalG and MalK) and a solute-binding protein (MalE).

It is found in the cell inner membrane. It catalyses the reaction D-maltose(out) + ATP + H2O = D-maltose(in) + ADP + phosphate + H(+). Its function is as follows. Part of the ABC transporter complex MalEFGK involved in maltose/maltodextrin import. Responsible for energy coupling to the transport system. This is Maltose/maltodextrin import ATP-binding protein MalK from Photorhabdus laumondii subsp. laumondii (strain DSM 15139 / CIP 105565 / TT01) (Photorhabdus luminescens subsp. laumondii).